Consider the following 142-residue polypeptide: Putative transcriptional regulatory protein PF0535 (142 aa).

This sequence belongs to the Tfx family.

Putative transcriptional regulator. The sequence is that of Putative transcriptional regulatory protein PF0535 from Pyrococcus furiosus (strain ATCC 43587 / DSM 3638 / JCM 8422 / Vc1).